A 98-amino-acid chain; its full sequence is Keratin-associated protein 3-3 (98 aa).

Ala2 is modified (N-acetylalanine). 3 repeat units span residues 3–7 (CCAPL), 8–12 (CCSAR), and 47–51 (CCDNC). The tract at residues 3 to 59 (CCAPLCCSARTSPATTICSSDKFCRCGVCLPSTCPHTVWLLEPTCCDNCPPPCHIPQ) is 3 X 5 AA repeats of C-C-X(3).

The protein belongs to the KRTAP type 3 family. In terms of assembly, interacts with hair keratins.

In terms of biological role, in the hair cortex, hair keratin intermediate filaments are embedded in an interfilamentous matrix, consisting of hair keratin-associated proteins (KRTAP), which are essential for the formation of a rigid and resistant hair shaft through their extensive disulfide bond cross-linking with abundant cysteine residues of hair keratins. The matrix proteins include the high-sulfur and high-glycine-tyrosine keratins. In Bos taurus (Bovine), this protein is Keratin-associated protein 3-3.